The primary structure comprises 371 residues: Cysteine proteinase 1 (371 aa).

An N-terminal signal peptide occupies residues 1 to 18 (MAHRVLLLLSLASAAAVA). A propeptide spans 19 to 136 (AAVDAEDPLI…HEAPVLPTDG (118 aa)) (activation peptide). 2 disulfide bridges follow: Cys-158–Cys-208 and Cys-192–Cys-241. Cys-161 is a catalytic residue. Asn-254 carries an N-linked (GlcNAc...) asparagine glycan. Cysteines 297 and 354 form a disulfide. Active-site residues include His-303 and Asn-330.

The protein belongs to the peptidase C1 family. Expressed during the late stages of seed ripening, in mature seeds and during germination.

Its function is as follows. Involved in the degradation of the storage protein zein. May play a role in proteolysis during emergencies. The sequence is that of Cysteine proteinase 1 (CCP1) from Zea mays (Maize).